The following is a 221-amino-acid chain: Endo-1,4-beta-xylanase 2 (221 aa).

The first 19 residues, 1-19, serve as a signal peptide directing secretion; the sequence is MVAFTSLLAGFAAIAGVLS. Positions 32 to 221 constitute a GH11 domain; the sequence is QTIGPGTGYS…SSGSASITVS (190 aa). Asparagine 69 and asparagine 92 each carry an N-linked (GlcNAc...) asparagine glycan. The active-site Nucleophile is the glutamate 117. Glutamate 208 functions as the Proton donor in the catalytic mechanism.

Belongs to the glycosyl hydrolase 11 (cellulase G) family.

Its subcellular location is the secreted. The catalysed reaction is Endohydrolysis of (1-&gt;4)-beta-D-xylosidic linkages in xylans.. Its pathway is glycan degradation; xylan degradation. In terms of biological role, endo-1,4-beta-xylanase involved in the hydrolysis of xylan, a major structural heterogeneous polysaccharide found in plant biomass representing the second most abundant polysaccharide in the biosphere, after cellulose. The sequence is that of Endo-1,4-beta-xylanase 2 (Xyn2) from Trichoderma harzianum (Hypocrea lixii).